Here is a 250-residue protein sequence, read N- to C-terminus: Low affinity immunoglobulin gamma Fc region receptor III-A (250 aa).

The first 16 residues, 1-16, serve as a signal peptide directing secretion; it reads MWQLLPPAALLLLVSA. Over 17–208 the chain is Extracellular; that stretch reads DTQTADPSKA…VSSFFLPWHQ (192 aa). Ig-like C2-type domains follow at residues 23 to 105 and 99 to 189; these read PSKA…LEVH and PVKL…VQIT. 2 cysteine pairs are disulfide-bonded: Cys-47/Cys-89 and Cys-128/Cys-172. Asn-56 and Asn-63 each carry an N-linked (GlcNAc...) asparagine glycan. N-linked (GlcNAc...) asparagine glycosylation is present at Asn-180. Residues 209–225 traverse the membrane as a helical segment; the sequence is ITFCLVMGVLFAVDTGL. The Cytoplasmic portion of the chain corresponds to 226 to 250; it reads YFSVRRHLQSSEEWRDGKVTWSKGP.

As to quaternary structure, forms a heterooligomeric complex with ITAM-containing signaling subunits FCER1G. Interacts (via transmembrane domain) with signaling subunits; this interaction is a prerequisite for receptor complex expression on the cell surface and intracellular signal transduction. Binds the Fc region of antigen-complexed IgG. Expressed in gamma-delta T cells.

It is found in the cell membrane. Receptor for the invariable Fc fragment of immunoglobulin gamma (IgG). Optimally activated upon binding of clustered antigen-IgG complexes displayed on cell surfaces, triggers lysis of antibody-coated cells, a process known as antibody-dependent cellular cytotoxicity (ADCC). Does not bind free monomeric IgG, thus avoiding inappropriate effector cell activation in the absence of antigenic trigger. Mediates IgG effector functions on natural killer (NK) cells. Binds antigen-IgG complexes generated upon infection and triggers NK cell-dependent cytokine production and degranulation to limit viral load and propagation. Fc-binding subunit that associates with FCER1G adapters to form functional signaling complexes. Following the engagement of antigen-IgG complexes, triggers phosphorylation of immunoreceptor tyrosine-based activation motif (ITAM)-containing adapter with subsequent activation of phosphatidylinositol 3-kinase signaling and sustained elevation of intracellular calcium that ultimately drive NK cell activation. Mediates enhanced ADCC in response to afucosylated IgGs. In Bos taurus (Bovine), this protein is Low affinity immunoglobulin gamma Fc region receptor III-A.